Here is a 179-residue protein sequence, read N- to C-terminus: HTH-type transcriptional regulator AldR (179 aa).

The HTH asnC-type domain maps to 32 to 93; that stretch reads LDEVDRRILS…DIDPVAVGLP (62 aa). A DNA-binding region (H-T-H motif) is located at residues 51-70; sequence NNALADTVGIAPSTCHGRVR.

In terms of assembly, homooctamer. Homotetramer. Tetramer of dimers. The N-terminal DNA-binding domains are swapped, forming a dimer, and four dimers are assembled into an octamer through crystal symmetry.

Its activity is regulated as follows. The DNA-binding activity of AldR is modulated by interaction of AldR with various amino acids. Alanine, tryptophan, tyrosine and aspartate completely abolish the DNA binding ability of AldR. On the other hand, glutamate and asparagine reduce AldR binding to DNA but do not completely abolish it. Binding of amino acids can lead to structural modifications and changes in oligomeric association. Activity is also inhibited by 3 small molecule inhibitors, tetrahydroquinoline carbonitrile derivative (S010-0261), levothyroxine and liothyronine, which can disrupt the AldR-DNA complex. Transcriptional regulator that might play a role under hypoxic conditions. Regulates the expression of ald, which encodes L-alanine dehydrogenase. Serves as both an activator for ald expression in the presence of L-alanine and a repressor in the absence of L-alanine. Acts by binding directly to the upstream region of the ald gene. Four AldR-binding sites (O2, O1, O4 and O3) were identified upstream of the ald gene. O2, O1 and O4 are required for the induction of ald expression by alanine, while O3 is directly involved in the repression of ald expression, by occluding the access of RNA polymerase to the ald promoter. In addition to O3, both O1 and O4 are also necessary for full repression of ald expression in the absence of alanine. The sequence is that of HTH-type transcriptional regulator AldR from Mycobacterium tuberculosis (strain ATCC 25618 / H37Rv).